The sequence spans 322 residues: Ribose-phosphate pyrophosphokinase (322 aa).

Residues 43 to 45 and 102 to 103 contribute to the ATP site; these read DGE and RQ. Positions 137 and 177 each coordinate Mg(2+). The active site involves K201. D-ribose 5-phosphate-binding positions include R203, D227, and 231 to 235; that span reads DTAGT.

It belongs to the ribose-phosphate pyrophosphokinase family. Class I subfamily. In terms of assembly, homohexamer. The cofactor is Mg(2+).

It localises to the cytoplasm. The catalysed reaction is D-ribose 5-phosphate + ATP = 5-phospho-alpha-D-ribose 1-diphosphate + AMP + H(+). The protein operates within metabolic intermediate biosynthesis; 5-phospho-alpha-D-ribose 1-diphosphate biosynthesis; 5-phospho-alpha-D-ribose 1-diphosphate from D-ribose 5-phosphate (route I): step 1/1. Involved in the biosynthesis of the central metabolite phospho-alpha-D-ribosyl-1-pyrophosphate (PRPP) via the transfer of pyrophosphoryl group from ATP to 1-hydroxyl of ribose-5-phosphate (Rib-5-P). In Xylella fastidiosa (strain Temecula1 / ATCC 700964), this protein is Ribose-phosphate pyrophosphokinase.